The primary structure comprises 485 residues: Argininosuccinate lyase (485 aa).

This sequence belongs to the lyase 1 family. Argininosuccinate lyase subfamily.

Its subcellular location is the cytoplasm. The enzyme catalyses 2-(N(omega)-L-arginino)succinate = fumarate + L-arginine. The protein operates within amino-acid biosynthesis; L-arginine biosynthesis; L-arginine from L-ornithine and carbamoyl phosphate: step 3/3. In Paracidovorax citrulli (strain AAC00-1) (Acidovorax citrulli), this protein is Argininosuccinate lyase.